We begin with the raw amino-acid sequence, 120 residues long: UPF0342 protein LAF_1331 (120 aa).

The protein belongs to the UPF0342 family.

The protein is UPF0342 protein LAF_1331 of Limosilactobacillus fermentum (strain NBRC 3956 / LMG 18251) (Lactobacillus fermentum).